The following is a 362-amino-acid chain: uncharacterized protein (362 aa).

This is an uncharacterized protein from Caenorhabditis elegans.